We begin with the raw amino-acid sequence, 380 residues long: 3-dehydroquinate synthase (380 aa).

NAD(+) contacts are provided by residues 100–104, 124–125, K137, and K146; these read GAASD and TT. 3 residues coordinate Zn(2+): E179, H251, and H267. The segment at 320–343 is disordered; sequence YMQRDKKNMQSNDTDSDKDSREMP.

The protein belongs to the sugar phosphate cyclases superfamily. Dehydroquinate synthase family. The cofactor is NAD(+). Co(2+) is required as a cofactor. Requires Zn(2+) as cofactor.

It is found in the cytoplasm. It carries out the reaction 7-phospho-2-dehydro-3-deoxy-D-arabino-heptonate = 3-dehydroquinate + phosphate. Its pathway is metabolic intermediate biosynthesis; chorismate biosynthesis; chorismate from D-erythrose 4-phosphate and phosphoenolpyruvate: step 2/7. Its function is as follows. Catalyzes the conversion of 3-deoxy-D-arabino-heptulosonate 7-phosphate (DAHP) to dehydroquinate (DHQ). This chain is 3-dehydroquinate synthase, found in Tropheryma whipplei (strain Twist) (Whipple's bacillus).